The sequence spans 1136 residues: Receptor-type guanylate cyclase gcy-4 (1136 aa).

The first 21 residues, 1 to 21, serve as a signal peptide directing secretion; sequence MRQLNYYIFISTILTYNLTHG. Residues 22–485 lie on the Extracellular side of the membrane; sequence QGPRPVIRVG…CPLPIFEQYR (464 aa). N-linked (GlcNAc...) asparagine glycans are attached at residues Asn40, Asn194, Asn252, Asn351, Asn377, Asn386, and Asn438. A helical membrane pass occupies residues 486 to 506; it reads ALVIVAIAVTILILLAIIICM. The Cytoplasmic segment spans residues 507 to 1136; sequence SSKIRNRRVE…LRREMMRVEV (630 aa). Residues 533–833 enclose the Protein kinase domain; the sequence is LPMHRRASKS…EDNLMDHVFS (301 aa). The disordered stretch occupies residues 536–565; the sequence is HRRASKSSQESETESASETENFTSKSGDTM. The Guanylate cyclase domain occupies 891–1021; it reads TVFFSDLVKF…DTVNTASRME (131 aa).

The protein belongs to the adenylyl cyclase class-4/guanylyl cyclase family. In terms of tissue distribution, expression is biased toward ASE right (ASER) sensory neuron.

It is found in the cell membrane. It carries out the reaction GTP = 3',5'-cyclic GMP + diphosphate. Guanylate cyclase involved in the production of the second messenger cGMP. Regulates chemotaxis responses toward Br(1-) and I(1-) salt ions in ASE right (ASER) sensory neuron. The protein is Receptor-type guanylate cyclase gcy-4 of Caenorhabditis elegans.